Consider the following 191-residue polypeptide: Ankyrin repeat domain-containing protein 22 (191 aa).

ANK repeat units lie at residues 39-68 (NGDT…NVNL), 72-100 (KERT…MPVL), 101-130 (LIGY…EVNA), and 134-163 (YGCT…DPTI).

This chain is Ankyrin repeat domain-containing protein 22 (ANKRD22), found in Homo sapiens (Human).